The following is a 268-amino-acid chain: Movement protein (268 aa).

The tract at residues 215–243 (GKKSDVRKGKNSSSDRSVPNKNYRNVKDF) is disordered. The span at 225-237 (NSSSDRSVPNKNY) shows a compositional bias: polar residues.

This sequence belongs to the tobamovirus movement protein family. In terms of assembly, binds to host RBCS at the plasmodesmata; this interaction seems required for viral systemic movement. In resistant plants, interacts with host MBP2C at host microtubules; this interaction prevents virus cell to cell movement. In resistant plants, interacts with host resistance (R) protein (e.g. tomato ToMV resistance protein TM-2(2), AC Q71BG9) at the host plasma membrane; this interaction triggers host defense responses leading to programmed cell death.

The protein localises to the host cytoplasm. It is found in the host cytoskeleton. Its subcellular location is the host cell junction. The protein resides in the host plasmodesma. In terms of biological role, transports viral genome to neighboring plant cells directly through plasmosdesmata, without any budding. The movement protein allows efficient cell to cell propagation, by bypassing the host cell wall barrier. Forms a ribonucleoprotein complex with viral RNA. Binds microtubules and modulates microtubule stability. Can bind double-stranded DNA. Triggers host hypersensitive defense reaction in incompatible plants harboring resistance (R) proteins. The polypeptide is Movement protein (MP) (Nicotiana tabacum (Common tobacco)).